Reading from the N-terminus, the 406-residue chain is Tryptophan synthase beta chain (406 aa).

An N6-(pyridoxal phosphate)lysine modification is found at Lys97.

The protein belongs to the TrpB family. Tetramer of two alpha and two beta chains. Pyridoxal 5'-phosphate serves as cofactor.

The catalysed reaction is (1S,2R)-1-C-(indol-3-yl)glycerol 3-phosphate + L-serine = D-glyceraldehyde 3-phosphate + L-tryptophan + H2O. The protein operates within amino-acid biosynthesis; L-tryptophan biosynthesis; L-tryptophan from chorismate: step 5/5. In terms of biological role, the beta subunit is responsible for the synthesis of L-tryptophan from indole and L-serine. This Lacticaseibacillus casei (strain BL23) (Lactobacillus casei) protein is Tryptophan synthase beta chain.